We begin with the raw amino-acid sequence, 85 residues long: Large ribosomal subunit protein bL27 (85 aa).

The interval Met1–Leu21 is disordered.

This sequence belongs to the bacterial ribosomal protein bL27 family.

This is Large ribosomal subunit protein bL27 from Ectopseudomonas mendocina (strain ymp) (Pseudomonas mendocina).